The chain runs to 379 residues: Dual-specificity RNA methyltransferase RlmN (379 aa).

E97 acts as the Proton acceptor in catalysis. One can recognise a Radical SAM core domain in the interval 103–343 (QGGRGTLCVS…VRTTRGDDID (241 aa)). A disulfide bond links C110 and C346. The [4Fe-4S] cluster site is built by C117, C121, and C124. Residues 171–172 (GE), S203, 225–227 (SLH), and N303 contribute to the S-adenosyl-L-methionine site. The active-site S-methylcysteine intermediate is the C346.

Belongs to the radical SAM superfamily. RlmN family. It depends on [4Fe-4S] cluster as a cofactor.

Its subcellular location is the cytoplasm. The enzyme catalyses adenosine(2503) in 23S rRNA + 2 reduced [2Fe-2S]-[ferredoxin] + 2 S-adenosyl-L-methionine = 2-methyladenosine(2503) in 23S rRNA + 5'-deoxyadenosine + L-methionine + 2 oxidized [2Fe-2S]-[ferredoxin] + S-adenosyl-L-homocysteine. It carries out the reaction adenosine(37) in tRNA + 2 reduced [2Fe-2S]-[ferredoxin] + 2 S-adenosyl-L-methionine = 2-methyladenosine(37) in tRNA + 5'-deoxyadenosine + L-methionine + 2 oxidized [2Fe-2S]-[ferredoxin] + S-adenosyl-L-homocysteine. Functionally, specifically methylates position 2 of adenine 2503 in 23S rRNA and position 2 of adenine 37 in tRNAs. m2A2503 modification seems to play a crucial role in the proofreading step occurring at the peptidyl transferase center and thus would serve to optimize ribosomal fidelity. The sequence is that of Dual-specificity RNA methyltransferase RlmN from Pseudomonas aeruginosa (strain ATCC 15692 / DSM 22644 / CIP 104116 / JCM 14847 / LMG 12228 / 1C / PRS 101 / PAO1).